The sequence spans 533 residues: Na(+)/H(+) antiporter NhaB (533 aa).

A run of 11 helical transmembrane segments spans residues 10 to 30, 67 to 87, 98 to 118, 131 to 165, 209 to 229, 247 to 267, 310 to 330, 355 to 375, 396 to 416, 454 to 474, and 481 to 501; these read IGNFLGNSPKWYKIAILSFLI, PGGLLAIEAVAIGMTSASQVL, LLLVFMVAGIYFMKQLLLFVF, VSLLFCLASAFLSAFLDALTVIAVIITVAVGFYSI, LLMHAGVGTALGGVCTMVGEP, IRMSPVTVPVLFAGILTCFIV, AFVGVWLIAGLALHLASVGLI, EEALPFTALLAVFFAVVAVII, LVIFYIANGLLSMVSDNVFVG, ATPNGQAAFLFLLTSALAPLI, and MVWMALPYTIVLSIVGVMAIQ.

Belongs to the NhaB Na(+)/H(+) (TC 2.A.34) antiporter family.

It is found in the cell inner membrane. It catalyses the reaction 2 Na(+)(in) + 3 H(+)(out) = 2 Na(+)(out) + 3 H(+)(in). Functionally, na(+)/H(+) antiporter that extrudes sodium in exchange for external protons. The protein is Na(+)/H(+) antiporter NhaB of Shewanella sp. (strain ANA-3).